Reading from the N-terminus, the 584-residue chain is Asparagine synthetase [glutamine-hydrolyzing] 1 (584 aa).

Cys2 (for GATase activity) is an active-site residue. The 184-residue stretch at 2 to 185 (CGILAVLGCS…PGHFYSSKLG (184 aa)) folds into the Glutamine amidotransferase type-2 domain. L-glutamine is bound by residues 50–54 (RLAVI), 75–77 (NGE), and Asp98. The 324-residue stretch at 193 to 516 (PPWFNESVPS…PQNSARLTVP (324 aa)) folds into the Asparagine synthetase domain. ATP is bound by residues Leu231, Val267, and 341–342 (SG).

It catalyses the reaction L-aspartate + L-glutamine + ATP + H2O = L-asparagine + L-glutamate + AMP + diphosphate + H(+). It functions in the pathway amino-acid biosynthesis; L-asparagine biosynthesis; L-asparagine from L-aspartate (L-Gln route): step 1/1. In terms of biological role, essential for nitrogen assimilation, distribution and remobilization within the plant via the phloem. This Arabidopsis thaliana (Mouse-ear cress) protein is Asparagine synthetase [glutamine-hydrolyzing] 1 (ASN1).